A 1762-amino-acid polypeptide reads, in one-letter code: Lysine-specific demethylase 3B (1762 aa).

Position 2 is an N-acetylalanine (alanine 2). Disordered regions lie at residues methionine 253–glutamine 350 and threonine 426–leucine 468. Residues alanine 299–valine 310 show a composition bias toward basic and acidic residues. Residues threonine 426–valine 435 show a composition bias toward low complexity. The segment covering glycine 453–asparagine 465 has biased composition (polar residues). 4 positions are modified to phosphoserine: serine 493, serine 547, serine 557, and serine 561. Residues serine 574–threonine 613 form a disordered region. Threonine 615 is subject to Phosphothreonine. The span at threonine 713 to proline 746 shows a compositional bias: polar residues. The tract at residues threonine 713–leucine 763 is disordered. Residues serine 767, serine 774, and serine 779 each carry the phosphoserine modification. Residue lysine 789 forms a Glycyl lysine isopeptide (Lys-Gly) (interchain with G-Cter in SUMO2) linkage. At serine 799 the chain carries Phosphoserine. Residues alanine 806–serine 853 are disordered. The C6-type zinc-finger motif lies at cysteine 1032–cysteine 1057. Over residues glutamine 1146–serine 1163 the composition is skewed to polar residues. Residues glutamine 1146–alanine 1217 are disordered. 2 positions are modified to phosphoserine: serine 1254 and serine 1260. Positions serine 1285 to proline 1306 are disordered. Positions leucine 1294 to leucine 1298 match the LXXLL motif motif. The JmjC domain occupies methionine 1499–arginine 1722. Positions 1561, 1563, and 1690 each coordinate Fe cation.

It belongs to the JHDM2 histone demethylase family. The cofactor is Fe(2+).

Its subcellular location is the nucleus. It carries out the reaction N(6),N(6)-dimethyl-L-lysyl(9)-[histone H3] + 2 2-oxoglutarate + 2 O2 = L-lysyl(9)-[histone H3] + 2 formaldehyde + 2 succinate + 2 CO2. Its function is as follows. Histone demethylase that specifically demethylates 'Lys-9' of histone H3, thereby playing a central role in histone code. Demethylation of Lys residue generates formaldehyde and succinate May have tumor suppressor activity. The polypeptide is Lysine-specific demethylase 3B (Kdm3b) (Mus musculus (Mouse)).